The chain runs to 107 residues: Integration host factor (107 aa).

The tract at residues 1–20 (MALPPLTPEQRAAALEKAAA) is disordered. Low complexity predominate over residues 9–18 (EQRAAALEKA). Position 54 (lysine 54) interacts with DNA. An H2TH motif, binds DNA motif is present at residues 64–71 (LPGVGKVR). Residues serine 82, arginine 85, arginine 88, serine 92, asparagine 93, and glutamine 94 each coordinate DNA. The tract at residues 82–94 (SESRRVRGLGSNQ) is lid, binds DNA.

Belongs to the actinobacterial IHF (aIHF) family. In terms of assembly, monomer.

Its subcellular location is the cytoplasm. The protein localises to the spore. The protein resides in the nucleoid. A nucleoid-associated protein (NAP) that probably plays a role in chromosome compactation. Contributes to development and secondary metabolism, but is dispensable for growth and viability. Binds to the promoter region of a number of genes (including itself); multiple molecules of the protein bind to the DNA simultaneously, deletion alters the expression of about 30 genes (both up- and down-regulation occurs). Plays a role in controlling viability. Binds dsDNA without any obvious sequence specificity, in a concentration and length-dependent manner. Promotes supercoiling in a topoisomerase-dependent manner (counteracts TopA plasmid relaxation). Binds DNA as a monomer, contacting 8 base pairs via the phosphate backbone; each monomer can bind 2 DNA duplexes, allowing a bridging function. Alters DNA topology, constraining negative supercoils, possibly by DNA twist. Longer dsDNA binds more than one sIHF subunit. In Streptomyces coelicolor (strain ATCC BAA-471 / A3(2) / M145), this protein is Integration host factor.